A 469-amino-acid polypeptide reads, in one-letter code: Aspartyl/glutamyl-tRNA(Asn/Gln) amidotransferase subunit B (469 aa).

Belongs to the GatB/GatE family. GatB subfamily. Heterotrimer of A, B and C subunits.

The catalysed reaction is L-glutamyl-tRNA(Gln) + L-glutamine + ATP + H2O = L-glutaminyl-tRNA(Gln) + L-glutamate + ADP + phosphate + H(+). The enzyme catalyses L-aspartyl-tRNA(Asn) + L-glutamine + ATP + H2O = L-asparaginyl-tRNA(Asn) + L-glutamate + ADP + phosphate + 2 H(+). In terms of biological role, allows the formation of correctly charged Asn-tRNA(Asn) or Gln-tRNA(Gln) through the transamidation of misacylated Asp-tRNA(Asn) or Glu-tRNA(Gln) in organisms which lack either or both of asparaginyl-tRNA or glutaminyl-tRNA synthetases. The reaction takes place in the presence of glutamine and ATP through an activated phospho-Asp-tRNA(Asn) or phospho-Glu-tRNA(Gln). In Methanococcus maripaludis (strain DSM 14266 / JCM 13030 / NBRC 101832 / S2 / LL), this protein is Aspartyl/glutamyl-tRNA(Asn/Gln) amidotransferase subunit B.